Consider the following 736-residue polypeptide: Putative ATP-dependent RNA helicase CG14443 (736 aa).

Disordered stretches follow at residues 32–58 (TKSS…SSVL), 73–166 (GIEG…GERP), 183–237 (NSFK…NSWR), and 265–296 (SFTR…NTWK). Composition is skewed to low complexity over residues 34 to 58 (SSIW…SSVL) and 125 to 160 (SSES…SHGS). A compositionally biased stretch (basic and acidic residues) spans 190–199 (TSRENKESRS). Positions 277 to 296 (LCYQDQSKNPSRPSNYNTWK) are enriched in polar residues. Positions 330–358 (LSFERSGFNATILQQLEDQGYDGPTPIQA) match the Q motif motif. One can recognise a Helicase ATP-binding domain in the interval 361 to 534 (WSIAKEGKNI…NKFLGQYTAI (174 aa)). Residue 374–381 (SGKGTGKT) coordinates ATP. Positions 482–485 (DNID) match the DEAD box motif. The 159-residue stretch at 561–719 (KVERLMKELT…LLQLAEEKMF (159 aa)) folds into the Helicase C-terminal domain.

The protein belongs to the DEAD box helicase family.

It catalyses the reaction ATP + H2O = ADP + phosphate + H(+). In terms of biological role, probable ATP-binding RNA helicase. The protein is Putative ATP-dependent RNA helicase CG14443 of Drosophila melanogaster (Fruit fly).